A 350-amino-acid polypeptide reads, in one-letter code: Protein RecA (350 aa).

Residue 67-74 (GPESSGKT) coordinates ATP.

Belongs to the RecA family.

Its subcellular location is the cytoplasm. Can catalyze the hydrolysis of ATP in the presence of single-stranded DNA, the ATP-dependent uptake of single-stranded DNA by duplex DNA, and the ATP-dependent hybridization of homologous single-stranded DNAs. It interacts with LexA causing its activation and leading to its autocatalytic cleavage. The polypeptide is Protein RecA (Wolinella succinogenes (strain ATCC 29543 / DSM 1740 / CCUG 13145 / JCM 31913 / LMG 7466 / NCTC 11488 / FDC 602W) (Vibrio succinogenes)).